The chain runs to 235 residues: Segregation and condensation protein A (235 aa).

This sequence belongs to the ScpA family. In terms of assembly, component of a cohesin-like complex composed of ScpA, ScpB and the Smc homodimer, in which ScpA and ScpB bind to the head domain of Smc. The presence of the three proteins is required for the association of the complex with DNA.

The protein resides in the cytoplasm. Its function is as follows. Participates in chromosomal partition during cell division. May act via the formation of a condensin-like complex containing Smc and ScpB that pull DNA away from mid-cell into both cell halves. The sequence is that of Segregation and condensation protein A from Streptococcus mutans serotype c (strain ATCC 700610 / UA159).